Here is a 540-residue protein sequence, read N- to C-terminus: ADP,ATP carrier protein 2 (540 aa).

The next 12 helical transmembrane spans lie at 23–43, 61–81, 93–113, 150–170, 185–205, 222–242, 292–312, 334–354, 361–381, 389–409, 455–475, and 477–497; these read FSKFIPLFFLAFFVGVNYALL, VIPFLKVWGIVPGAVIVTMIY, VFISLVGGFLGFFALFATVIY, LYYVMSELWSSIVLSTLFWGV, ALINTGLNLSSVFAGEVSLWL, EVLLNITLLIVLAGGVILYLY, LLGIAVVVLSYNLVIHLFEVV, ITTLTGIVSALTGIFAAGQTI, IGALVPPLTMLITGALFFGAI, MIFGGILGISPLVLTAWLGGV, SGGSLVYQGLLIIFSSVAASL, and AITIVLLLALGSWIFVIAWLG.

The protein belongs to the ADP/ATP translocase tlc family.

The protein localises to the cell membrane. This is ADP,ATP carrier protein 2 (tlcB) from Chlamydia trachomatis serovar D (strain ATCC VR-885 / DSM 19411 / UW-3/Cx).